Consider the following 432-residue polypeptide: Glutamate-1-semialdehyde 2,1-aminomutase (432 aa).

Lys269 carries the N6-(pyridoxal phosphate)lysine modification.

The protein belongs to the class-III pyridoxal-phosphate-dependent aminotransferase family. HemL subfamily. Homodimer. It depends on pyridoxal 5'-phosphate as a cofactor.

It is found in the cytoplasm. It catalyses the reaction (S)-4-amino-5-oxopentanoate = 5-aminolevulinate. Its pathway is porphyrin-containing compound metabolism; protoporphyrin-IX biosynthesis; 5-aminolevulinate from L-glutamyl-tRNA(Glu): step 2/2. This is Glutamate-1-semialdehyde 2,1-aminomutase from Desulforamulus reducens (strain ATCC BAA-1160 / DSM 100696 / MI-1) (Desulfotomaculum reducens).